We begin with the raw amino-acid sequence, 433 residues long: 3-phosphoshikimate 1-carboxyvinyltransferase (433 aa).

Lys-22, Ser-23, and Arg-27 together coordinate 3-phosphoshikimate. Position 22 (Lys-22) interacts with phosphoenolpyruvate. Residues Gly-94 and Arg-122 each coordinate phosphoenolpyruvate. 3-phosphoshikimate is bound by residues Ser-168, Ser-169, Gln-170, Ser-196, Asp-319, and Lys-346. Gln-170 is a phosphoenolpyruvate binding site. Asp-319 serves as the catalytic Proton acceptor. Positions 350, 394, and 418 each coordinate phosphoenolpyruvate.

It belongs to the EPSP synthase family. In terms of assembly, monomer.

It localises to the cytoplasm. The catalysed reaction is 3-phosphoshikimate + phosphoenolpyruvate = 5-O-(1-carboxyvinyl)-3-phosphoshikimate + phosphate. It functions in the pathway metabolic intermediate biosynthesis; chorismate biosynthesis; chorismate from D-erythrose 4-phosphate and phosphoenolpyruvate: step 6/7. In terms of biological role, catalyzes the transfer of the enolpyruvyl moiety of phosphoenolpyruvate (PEP) to the 5-hydroxyl of shikimate-3-phosphate (S3P) to produce enolpyruvyl shikimate-3-phosphate and inorganic phosphate. The sequence is that of 3-phosphoshikimate 1-carboxyvinyltransferase from Nitrosomonas eutropha (strain DSM 101675 / C91 / Nm57).